The primary structure comprises 287 residues: CRISPR-associated endoribonuclease Cas6 1 (287 aa).

This sequence belongs to the CRISPR-associated endoribonuclease Cas6 family. As to quaternary structure, part of the aCascade ribonucleoprotein complex, minimally composed of Csa2 and Cas5a, which binds crRNA. Other possible components of aCascade in strain P1 are Cas6b (SSO1437) and Csa5 (SSO1443), while SSO1399, Cas5b (SSO1400) and SSO1401 have sometimes been seen weakly associated. Csa2 is probably the major RNA-binding subunit. The Csa2-Cas5a-crRNA complex also binds target DNA homologous to crRNA, probably forming an R-loop. Purified aCascade forms a filament about 6 nm in width.

CRISPR (clustered regularly interspaced short palindromic repeat) is an adaptive immune system that provides protection against mobile genetic elements (viruses, transposable elements and conjugative plasmids). CRISPR clusters contain spacers, sequences complementary to antecedent mobile elements, and target invading nucleic acids. CRISPR clusters are transcribed and processed into CRISPR RNA (crRNA). This is CRISPR-associated endoribonuclease Cas6 1 (cas6a) from Saccharolobus solfataricus (strain ATCC 35092 / DSM 1617 / JCM 11322 / P2) (Sulfolobus solfataricus).